The primary structure comprises 610 residues: MNIVAPQLTPVVTTGSLPASTKIVKPGTLYPDLRVPMREISLHPTSGEPPVTVYDSSGPYTDPAHVISIDAGLPRLRESWIKARGDVESYDGRIVKPEDNGFATGERLTPEFPVRNTPLKAKAGRAVTQLAYARAGIVTPEMEFIAIRENLGRQAAKEALARDGESFGAHVPDFVTPEFVRREVAEGRAIIPANINHPESEPMIIGRNFLVKINANIGNSAVTSSMAEEVEKMVWAIRWGADTVMDLSTGRNIHNIREWIIRNSPVPIGTVPLYQALEKVNGIAEDLTWEVYRDTLIEQAEQGVDYFTIHAGVRLAYIPLTVNRVTGIVSRGGSIMAKWCLHHHKESFLYEHFEEICDICRAYDVSFSLGDGLRPGSIADANDAAQFAELETLGELTKIAWAKDCQVMIEGPGHVPMHKIKENMDKQLEVCGEAPFYTLGPLTTDIAPGYDHITSGIGAAMIGWFGTAMLCYVTPKEHLGLPDRSDVKTGVITYKIAAHAADLAKGHPAARIRDDALSRARFEFRWEDQFNLSLDPDTARSFHDETLPKEAHKVAHFCSMCGPKFCSMRISHDIRAEAQKEGLEAMAAKYRDGGDLYMPVAEVAKTPAGE.

Residues N216, M245, Y274, H310, 330 to 332, 371 to 374, and E410 each bind substrate; these read SRG and DGLR. Zn(2+) is bound at residue H414. Y437 contacts substrate. Residue H478 coordinates Zn(2+). Residues C558, C561, and C566 each contribute to the [4Fe-4S] cluster site.

It belongs to the ThiC family. As to quaternary structure, homodimer. [4Fe-4S] cluster serves as cofactor.

The catalysed reaction is 5-amino-1-(5-phospho-beta-D-ribosyl)imidazole + S-adenosyl-L-methionine = 4-amino-2-methyl-5-(phosphooxymethyl)pyrimidine + CO + 5'-deoxyadenosine + formate + L-methionine + 3 H(+). It functions in the pathway cofactor biosynthesis; thiamine diphosphate biosynthesis. Catalyzes the synthesis of the hydroxymethylpyrimidine phosphate (HMP-P) moiety of thiamine from aminoimidazole ribotide (AIR) in a radical S-adenosyl-L-methionine (SAM)-dependent reaction. The sequence is that of Phosphomethylpyrimidine synthase from Rhizobium etli (strain ATCC 51251 / DSM 11541 / JCM 21823 / NBRC 15573 / CFN 42).